The following is a 285-amino-acid chain: 2,3,4,5-tetrahydropyridine-2,6-dicarboxylate N-succinyltransferase (285 aa).

This sequence belongs to the transferase hexapeptide repeat family.

The protein resides in the cytoplasm. It catalyses the reaction (S)-2,3,4,5-tetrahydrodipicolinate + succinyl-CoA + H2O = (S)-2-succinylamino-6-oxoheptanedioate + CoA. It functions in the pathway amino-acid biosynthesis; L-lysine biosynthesis via DAP pathway; LL-2,6-diaminopimelate from (S)-tetrahydrodipicolinate (succinylase route): step 1/3. The polypeptide is 2,3,4,5-tetrahydropyridine-2,6-dicarboxylate N-succinyltransferase (Beijerinckia indica subsp. indica (strain ATCC 9039 / DSM 1715 / NCIMB 8712)).